The chain runs to 228 residues: 5'-methylthioadenosine/S-adenosylhomocysteine nucleosidase (228 aa).

E11 (proton acceptor) is an active-site residue. Substrate is bound by residues G77, I151, and 172-173; that span reads ME. The Proton donor role is filled by D196.

This sequence belongs to the PNP/UDP phosphorylase family. MtnN subfamily.

The catalysed reaction is S-adenosyl-L-homocysteine + H2O = S-(5-deoxy-D-ribos-5-yl)-L-homocysteine + adenine. It carries out the reaction S-methyl-5'-thioadenosine + H2O = 5-(methylsulfanyl)-D-ribose + adenine. It catalyses the reaction 5'-deoxyadenosine + H2O = 5-deoxy-D-ribose + adenine. The protein operates within amino-acid biosynthesis; L-methionine biosynthesis via salvage pathway; S-methyl-5-thio-alpha-D-ribose 1-phosphate from S-methyl-5'-thioadenosine (hydrolase route): step 1/2. Its function is as follows. Catalyzes the irreversible cleavage of the glycosidic bond in both 5'-methylthioadenosine (MTA) and S-adenosylhomocysteine (SAH/AdoHcy) to adenine and the corresponding thioribose, 5'-methylthioribose and S-ribosylhomocysteine, respectively. Also cleaves 5'-deoxyadenosine, a toxic by-product of radical S-adenosylmethionine (SAM) enzymes, into 5-deoxyribose and adenine. This is 5'-methylthioadenosine/S-adenosylhomocysteine nucleosidase from Staphylococcus epidermidis (strain ATCC 12228 / FDA PCI 1200).